Here is a 956-residue protein sequence, read N- to C-terminus: MVFCGDGGLSCESIDFALCCLRGRSGNYVQSRILPMADASPDPSKPDTLVLIDGHALAFRSYFALPPLNNSKGEMTHAIVGFMKLLLRLARQKSNQVIVVFDPPVKTFRHEQYEGYKSGRAQTPEDLPGQINRIRALVDALGFPRLEEPGYEADDVIASLTRMAEGKGYEVRIVTSDRDAYQLLDEHVKVIANDFSLIGPAQVEEKYGVTVRQWVDYRALTGDASDNIPGAKGIGPKTAAKLLQEYGTLEKVYEAAHAGTLKPDGTRKKLLDSEENVKFSHDLSCMVTDLPLDIEFGVRRLPDNPLVTEDLLTELELHSLRPMILGLNGPEQDGHAPDDLLEREHAQTPEEDEAAALPAFSAPELAEWQTPAEGAVWGYVLSREDDLTAALLAAATFEDGVARPAPVSEPDEWAQAEAPENLFGELLPSDKPLTKKEQKALEKAQKDAEKARAKLREQFPATVDEAEFVGQRTVTAAAAKALAAHLSVRGTVVEPGDDPLLYAYLLDPANTNMPVVAKRYLDREWPADAPTRAAITGHLLRELPPLLDDARRKMYDEMEKPLSGVLGRMEVRGVQVDSDFLQTLSIQAGVRLADLESQIHEYAGEEFHIRSPKQLETVLYDKLELASSKKTKLTGQRSTAVSALEPLRDAHPIIPLVLEFRELDKLRGTYLDPIPNLVNPHTGRLHTTFAQTAVATGRLSSLNPNLQNIPIRSELGREIRKGFIAEDGFTLIAADYSQIELRLLAHIADDPLMQQAFVEGADIHRRTAAQVLGLDEATVDANQRRAAKTVNFGVLYGMSAHRLSNDLGIPYAEAATFIEIYFATYPGIRRYINHTLDFGRTHGYVETLYGRRRYVPGLSSRNRVQREAEERLAYNMPIQGTAADIMKLAMVQLDPQLDAIGARMLLQVHDELLIEAPLDKAEQVAALTKKVMENVVQLKVPLAVEVGTGPNWFDTK.

Residues 209-296 enclose the 5'-3' exonuclease domain; it reads VTVRQWVDYR…VTDLPLDIEF (88 aa).

This sequence belongs to the DNA polymerase type-A family. Single-chain monomer with multiple functions.

It catalyses the reaction DNA(n) + a 2'-deoxyribonucleoside 5'-triphosphate = DNA(n+1) + diphosphate. Functionally, a DNA polymerase, required for DNA repair after DNA damage induced by ionizing radiation (IR); this is not the major DNA polymerase. Following severe irradiation (7 kGy of gamma irradiation) genomic DNA is fragmented. DNA is progressively degraded for the first 1.5 hours after IR, in a step promoted by RecA and counterbalanced by DNA Pol I and Pol III, followed by massive DNA synthesis and genome reassembly in the next hour. Optimal priming of DNA synthesis requires both RecA and RadA, Pol III initiates DNA synthesis while both Pol I and Pol III are required for its continuation. May also have 5'-3' exonuclease activity. The protein is DNA polymerase I (polA) of Deinococcus radiodurans (strain ATCC 13939 / DSM 20539 / JCM 16871 / CCUG 27074 / LMG 4051 / NBRC 15346 / NCIMB 9279 / VKM B-1422 / R1).